We begin with the raw amino-acid sequence, 310 residues long: Serine/threonine-protein kinase pim-2 (310 aa).

The region spanning 30-290 (YTMGNLLGSG…LEQILQHPWM (261 aa)) is the Protein kinase domain. ATP-binding positions include 36–44 (LGSGGFGSV) and Lys59. Asp167 functions as the Proton acceptor in the catalytic mechanism.

This sequence belongs to the protein kinase superfamily. CAMK Ser/Thr protein kinase family. PIM subfamily. Autophosphorylated.

It catalyses the reaction L-seryl-[protein] + ATP = O-phospho-L-seryl-[protein] + ADP + H(+). The catalysed reaction is L-threonyl-[protein] + ATP = O-phospho-L-threonyl-[protein] + ADP + H(+). Its function is as follows. Proto-oncogene with serine/threonine kinase activity involved in cell survival and cell proliferation. The sequence is that of Serine/threonine-protein kinase pim-2 (pim2) from Danio rerio (Zebrafish).